The primary structure comprises 230 residues: Probable C4-dicarboxylate response regulator DctR (230 aa).

The 117-residue stretch at 8–124 folds into the Response regulatory domain; sequence RVLLIEDDPM…RLKAALTQYE (117 aa). Asp59 bears the 4-aspartylphosphate mark. Positions 183–209 form a DNA-binding region, H-T-H motif; sequence EEIGRDVGLARVTVRRYLNYLESVGQV.

In terms of processing, phosphorylated by DctS.

It localises to the cytoplasm. Its function is as follows. Member of the two-component regulatory system DctS/DctR. Essential for expression of DctP. The chain is Probable C4-dicarboxylate response regulator DctR (dctR) from Halalkalibacterium halodurans (strain ATCC BAA-125 / DSM 18197 / FERM 7344 / JCM 9153 / C-125) (Bacillus halodurans).